A 153-amino-acid polypeptide reads, in one-letter code: uncharacterized protein (153 aa).

It belongs to the RusA family.

This is an uncharacterized protein from Xylella fastidiosa (strain Temecula1 / ATCC 700964).